The following is a 360-amino-acid chain: DNA replication and repair protein RecF (360 aa).

An ATP-binding site is contributed by Gly30–Thr37.

The protein belongs to the RecF family.

It is found in the cytoplasm. Functionally, the RecF protein is involved in DNA metabolism; it is required for DNA replication and normal SOS inducibility. RecF binds preferentially to single-stranded, linear DNA. It also seems to bind ATP. In Shewanella pealeana (strain ATCC 700345 / ANG-SQ1), this protein is DNA replication and repair protein RecF.